Reading from the N-terminus, the 115-residue chain is Large ribosomal subunit protein eL30 (115 aa).

Phosphoserine occurs at positions 10 and 16. K26 carries the post-translational modification N6-acetyllysine; alternate. A Glycyl lysine isopeptide (Lys-Gly) (interchain with G-Cter in SUMO2); alternate cross-link involves residue K26.

The protein belongs to the eukaryotic ribosomal protein eL30 family. As to quaternary structure, component of the large ribosomal subunit.

Its subcellular location is the cytoplasm. In terms of biological role, component of the large ribosomal subunit. The ribosome is a large ribonucleoprotein complex responsible for the synthesis of proteins in the cell. In Oryctolagus cuniculus (Rabbit), this protein is Large ribosomal subunit protein eL30 (RPL30).